Reading from the N-terminus, the 502-residue chain is ATP synthase subunit alpha (502 aa).

169 to 176 is an ATP binding site; sequence GDRQTGKT.

It belongs to the ATPase alpha/beta chains family. F-type ATPases have 2 components, CF(1) - the catalytic core - and CF(0) - the membrane proton channel. CF(1) has five subunits: alpha(3), beta(3), gamma(1), delta(1), epsilon(1). CF(0) has three main subunits: a(1), b(2) and c(9-12). The alpha and beta chains form an alternating ring which encloses part of the gamma chain. CF(1) is attached to CF(0) by a central stalk formed by the gamma and epsilon chains, while a peripheral stalk is formed by the delta and b chains.

It localises to the cell inner membrane. It carries out the reaction ATP + H2O + 4 H(+)(in) = ADP + phosphate + 5 H(+)(out). In terms of biological role, produces ATP from ADP in the presence of a proton gradient across the membrane. The alpha chain is a regulatory subunit. This chain is ATP synthase subunit alpha, found in Nitratidesulfovibrio vulgaris (strain ATCC 29579 / DSM 644 / CCUG 34227 / NCIMB 8303 / VKM B-1760 / Hildenborough) (Desulfovibrio vulgaris).